The following is a 369-amino-acid chain: 3-dehydroquinate synthase (369 aa).

Residues 75-80 (DGEEHK), 109-113 (GVIGD), 133-134 (TT), lysine 146, lysine 155, and 173-176 (TLKT) each bind NAD(+). Zn(2+) is bound by residues glutamate 188, histidine 251, and histidine 268.

It belongs to the sugar phosphate cyclases superfamily. Dehydroquinate synthase family. The cofactor is Co(2+). Zn(2+) is required as a cofactor. Requires NAD(+) as cofactor.

The protein localises to the cytoplasm. It carries out the reaction 7-phospho-2-dehydro-3-deoxy-D-arabino-heptonate = 3-dehydroquinate + phosphate. Its pathway is metabolic intermediate biosynthesis; chorismate biosynthesis; chorismate from D-erythrose 4-phosphate and phosphoenolpyruvate: step 2/7. Its function is as follows. Catalyzes the conversion of 3-deoxy-D-arabino-heptulosonate 7-phosphate (DAHP) to dehydroquinate (DHQ). The polypeptide is 3-dehydroquinate synthase (Legionella pneumophila (strain Paris)).